Consider the following 151-residue polypeptide: Small ribosomal subunit protein uS19 (151 aa).

Residues 1-23 (MVVNKQGSVKSIKRKARKSRKVT) are disordered. Basic residues predominate over residues 11–23 (SIKRKARKSRKVT).

The protein belongs to the universal ribosomal protein uS19 family.

Protein S19 forms a complex with S13 that binds strongly to the 16S ribosomal RNA. This Thermoplasma volcanium (strain ATCC 51530 / DSM 4299 / JCM 9571 / NBRC 15438 / GSS1) protein is Small ribosomal subunit protein uS19 (rps19).